A 99-amino-acid polypeptide reads, in one-letter code: Ragulator complex protein LAMTOR4 (99 aa).

Met-1 is subject to N-acetylmethionine. Thr-2 is subject to N-acetylthreonine; in Ragulator complex protein LAMTOR4, N-terminally processed. A Phosphoserine; by PKA modification is found at Ser-67.

Belongs to the LAMTOR4 family. Part of the Ragulator complex composed of LAMTOR1, LAMTOR2, LAMTOR3, LAMTOR4 and LAMTOR5. LAMTOR4 and LAMTOR5 form a heterodimer that interacts, through LAMTOR1, with a LAMTOR2, LAMTOR3 heterodimer. The Ragulator complex interacts with both the mTORC1 complex and heterodimers constituted of the Rag GTPases RagA/RRAGA, RagB/RRAGB, RagC/RRAGC and RagD/RRAGD; regulated by amino acid availability. The Ragulator complex interacts with SLC38A9; the probable amino acid sensor. Component of the lysosomal folliculin complex (LFC), composed of FLCN, FNIP1 (or FNIP2), RagA/RRAGA or RagB/RRAGB GDP-bound, RagC/RRAGC or RagD/RRAGD GTP-bound, and Ragulator. Post-translationally, phosphorylation at Ser-67 by PKA inhibits Ragulator complex assembly.

The protein resides in the lysosome. As part of the Ragulator complex it is involved in amino acid sensing and activation of mTORC1, a signaling complex promoting cell growth in response to growth factors, energy levels, and amino acids. Activated by amino acids through a mechanism involving the lysosomal V-ATPase, the Ragulator plays a dual role for the small GTPases Rag (RagA/RRAGA, RagB/RRAGB, RagC/RRAGC and/or RagD/RRAGD): it (1) acts as a guanine nucleotide exchange factor (GEF), activating the small GTPases Rag and (2) mediates recruitment of Rag GTPases to the lysosome membrane. Activated Ragulator and Rag GTPases function as a scaffold recruiting mTORC1 to lysosomes where it is in turn activated. The chain is Ragulator complex protein LAMTOR4 from Homo sapiens (Human).